We begin with the raw amino-acid sequence, 404 residues long: Formate-dependent phosphoribosylglycinamide formyltransferase (404 aa).

N(1)-(5-phospho-beta-D-ribosyl)glycinamide-binding positions include 25-26 (EL) and E85. ATP contacts are provided by residues R118, K159, 164–169 (SSGKGQ), 199–202 (EGFI), and E207. Residues 123 to 318 (RLAAEELGLP…EFELHARAIL (196 aa)) enclose the ATP-grasp domain. Mg(2+)-binding residues include E277 and E289. N(1)-(5-phospho-beta-D-ribosyl)glycinamide is bound by residues D296, K365, and 372-373 (RR).

It belongs to the PurK/PurT family. In terms of assembly, homodimer.

It carries out the reaction N(1)-(5-phospho-beta-D-ribosyl)glycinamide + formate + ATP = N(2)-formyl-N(1)-(5-phospho-beta-D-ribosyl)glycinamide + ADP + phosphate + H(+). It participates in purine metabolism; IMP biosynthesis via de novo pathway; N(2)-formyl-N(1)-(5-phospho-D-ribosyl)glycinamide from N(1)-(5-phospho-D-ribosyl)glycinamide (formate route): step 1/1. In terms of biological role, involved in the de novo purine biosynthesis. Catalyzes the transfer of formate to 5-phospho-ribosyl-glycinamide (GAR), producing 5-phospho-ribosyl-N-formylglycinamide (FGAR). Formate is provided by PurU via hydrolysis of 10-formyl-tetrahydrofolate. The sequence is that of Formate-dependent phosphoribosylglycinamide formyltransferase from Burkholderia pseudomallei (strain 668).